A 953-amino-acid polypeptide reads, in one-letter code: GATA zinc finger domain-containing protein 14 (953 aa).

A compositionally biased stretch (polar residues) spans 1–21; it reads MFEKIPNQNSHSMGDNNTGYY. Disordered stretches follow at residues 1–109 and 216–756; these read MFEK…SPNR and TYGS…TQPQ. Low complexity predominate over residues 22–89; it reads NNNNNNNNNN…QLPSPQLSQP (68 aa). Polar residues predominate over residues 90–109; it reads NSMNTTPNQTSPNLRSSPNR. Composition is skewed to low complexity over residues 219 to 330, 342 to 683, and 690 to 756; these read SSNT…VNAN, NIYN…PNSS, and GNNG…TQPQ. The segment at 893 to 918 adopts a GATA-type zinc-finger fold; that stretch reads CTSCGTTQTPEWRKGPAGGKSLCNAC. A disordered region spans residues 934–953; sequence KVETTSSPPSTSMNVVNLLN.

The protein is GATA zinc finger domain-containing protein 14 (gtaN) of Dictyostelium discoideum (Social amoeba).